Reading from the N-terminus, the 551-residue chain is Small ribosomal subunit protein bS1 (551 aa).

S1 motif domains lie at 21–83 (GALV…LSRE), 101–167 (GEMV…VSRR), 188–256 (GQEI…LGMK), 273–343 (NSRV…LGIK), 360–430 (DEKI…LGIK), and 447–516 (DAVI…VSHK).

It belongs to the bacterial ribosomal protein bS1 family.

Binds mRNA; thus facilitating recognition of the initiation point. It is needed to translate mRNA with a short Shine-Dalgarno (SD) purine-rich sequence. The polypeptide is Small ribosomal subunit protein bS1 (rpsA) (Coxiella burnetii (strain RSA 493 / Nine Mile phase I)).